The primary structure comprises 428 residues: Succinyl-CoA--L-malate CoA-transferase alpha subunit (428 aa).

Positions 1–31 (MPPTGEEPSGHAESKPPASDPMSTPGTGQEQ) are disordered. Polar residues predominate over residues 21–31 (PMSTPGTGQEQ). The Nucleophile role is filled by aspartate 200.

It belongs to the CoA-transferase III family. As to quaternary structure, forms a large complex composed of six heterodimers (alpha, beta).

The enzyme catalyses succinyl-CoA + (S)-malate = (S)-malyl-CoA + succinate. It catalyses the reaction (3S)-citramalate + succinyl-CoA = (3S)-citramalyl-CoA + succinate. In terms of biological role, involved in the 3-hydroxypropionate cycle used for autotrophic carbon dioxide fixation. Catalyzes the transfer of CoA moiety from succinyl-CoA to L-malate to yield L-malyl-CoA. It is highly specific for succinyl-CoA as the CoA donor, however it can accept L-citramalate instead of L-malate as the CoA acceptor. The sequence is that of Succinyl-CoA--L-malate CoA-transferase alpha subunit (smtA) from Chloroflexus aurantiacus.